A 524-amino-acid polypeptide reads, in one-letter code: MSSTTSSSRSDLEKVPVPQVTPRDSDSDKGSLSPEPSTLEAQSSEKPPHHIFTRSRKLQMVCIVSLAAIFSPLSSNIYFPALDDVSKSLNISMSLATLTITVYMIVQGLAPSFWGSMSDATGRRPVFIGTFIVYLVANIALAESKNYGELMAFRALQAAGSAATISIGAGVIGDITNSEERGSLVGIFGGVRMLGQGIGPVFGGIFTQYLGYRSIFWFLTIAGGVSLLSILVLLPETLRPIAGNGTVKLNGIHKPFIYTITGQTGVVEGAQPEAKKTKTSWKSVFAPLTFLVEKDVFITLFFGSIVYTVWSMVTSSTTDLFSEVYGLSSLDIGLTFLGNGFGCMSGSYLVGYLMDYNHRLTEREYCEKHGYPAGTRVNLKSHPDFPIEVARMRNTWWVIAIFIVTVALYGVSLRTHLAVPIILQYFIAFCSTGLFTINSALVIDLYPGASASATAVNNLMRCLLGAGGVAIVQPILDALKPDYTFLLLAGITLVMTPLLYVEDRWGPGWRHARERRLKAKANGN.

Residues 1-49 (MSSTTSSSRSDLEKVPVPQVTPRDSDSDKGSLSPEPSTLEAQSSEKPPH) are disordered. A compositionally biased stretch (polar residues) spans 34–45 (PEPSTLEAQSSE). A helical transmembrane segment spans residues 60–80 (MVCIVSLAAIFSPLSSNIYFP). N-linked (GlcNAc...) asparagine glycosylation occurs at asparagine 90. The next 5 helical transmembrane spans lie at 95 to 115 (LATL…SFWG), 125 to 145 (PVFI…AESK), 155 to 175 (ALQA…IGDI), 186 to 206 (GIFG…GGIF), and 215 to 235 (IFWF…VLLP). The N-linked (GlcNAc...) asparagine glycan is linked to asparagine 244. 6 consecutive transmembrane segments (helical) span residues 296–316 (VFIT…VTSS), 332–352 (IGLT…LVGY), 395–415 (TWWV…SLRT), 417–437 (LAVP…LFTI), 459–479 (LMRC…LDAL), and 481–501 (PDYT…LLYV).

This sequence belongs to the major facilitator superfamily.

The protein localises to the cell membrane. It catalyses the reaction citrate(in) = citrate(out). Transmembrane transporter that exports citrate across the cell membrane. The sequence is that of Citrate exporter 1 from Aspergillus niger (strain ATCC 1015 / CBS 113.46 / FGSC A1144 / LSHB Ac4 / NCTC 3858a / NRRL 328 / USDA 3528.7).